The primary structure comprises 374 residues: Large ribosomal subunit protein bL27m (374 aa).

A mitochondrion-targeting transit peptide spans 1 to 41; that stretch reads MLRLSGVKSAVRARAAAGAAFSVSLSGPQAVSLLALPLVRH.

The protein belongs to the bacterial ribosomal protein bL27 family.

It localises to the mitochondrion. Functionally, component of the large subunit of mitochondrial ribosome. The sequence is that of Large ribosomal subunit protein bL27m (MRPL2) from Yarrowia lipolytica (strain CLIB 122 / E 150) (Yeast).